A 113-amino-acid polypeptide reads, in one-letter code: Histidine triad nucleotide-binding protein (113 aa).

Cys-5 and Cys-8 together coordinate Zn(2+). In terms of domain architecture, HIT spans 6-113 (IFCKIAQKQI…GGKKLAWDKL (108 aa)). Asp-31 provides a ligand contact to AMP. Residue His-47 participates in Zn(2+) binding. The AMP site is built by Asn-86, Gly-92, and Thr-94. His-97 is a Zn(2+) binding site. Residues 97–101 (HIHFH) carry the Histidine triad motif motif. AMP-binding residues include His-99 and His-101. The active-site Tele-AMP-histidine intermediate is His-99.

The protein belongs to the HINT family.

The protein localises to the nucleus. Its subcellular location is the cytoplasm. The catalysed reaction is adenosine 5'-phosphoramidate + H2O = AMP + NH4(+). In terms of biological role, hydrolyzes purine nucleotide phosphoramidates with a single phosphate group, including adenosine 5'monophosphoramidate (AMP-NH2), adenosine 5'monophosphomorpholidate (AMP-morpholidate) and guanosine 5'monophosphomorpholidate (GMP-morpholidate). Hydrolyzes lysyl-AMP (AMP-N-epsilon-(N-alpha-acetyl lysine methyl ester)) generated by lysine tRNA ligase, as well as Met-AMP, His-AMP and Asp-AMP, lysyl-GMP (GMP-N-epsilon-(N-alpha-acetyl lysine methyl ester)) and AMP-N-alanine methyl ester. May also function as scaffolding protein that mediates protein-protein interactions. The protein is Histidine triad nucleotide-binding protein of Entamoeba histolytica (strain ATCC 30459 / HM-1:IMSS / ABRM).